Here is a 78-residue protein sequence, read N- to C-terminus: Large ribosomal subunit protein bL28 (78 aa).

The protein belongs to the bacterial ribosomal protein bL28 family.

The chain is Large ribosomal subunit protein bL28 from Salmonella choleraesuis (strain SC-B67).